The sequence spans 98 residues: Co-chaperonin GroES 5 (98 aa).

It belongs to the GroES chaperonin family. In terms of assembly, heptamer of 7 subunits arranged in a ring. Interacts with the chaperonin GroEL.

The protein resides in the cytoplasm. In terms of biological role, together with the chaperonin GroEL, plays an essential role in assisting protein folding. The GroEL-GroES system forms a nano-cage that allows encapsulation of the non-native substrate proteins and provides a physical environment optimized to promote and accelerate protein folding. GroES binds to the apical surface of the GroEL ring, thereby capping the opening of the GroEL channel. The protein is Co-chaperonin GroES 5 of Mesorhizobium japonicum (strain LMG 29417 / CECT 9101 / MAFF 303099) (Mesorhizobium loti (strain MAFF 303099)).